The chain runs to 654 residues: MLTPRDENNEGDAMPMLKKPRYSSLSGQSTNITYQEHTISREERAAAVGRHEGFRGCTIWFTGLSGAGKTTISFALERTLNKLGIPCYGLDGDNIRHGLCKNLGFSKEDRQENIRRVAEVAKLFADSGMICLAAFISPFQEDRLDARKIHESENVKFIEVHVSTTLEVCEQRDPKPSELYKKARAGQILGFTGIDSAYEPPENAEIILDAGKDGVQQCVQKVLDHLESKGLLPEQIPDVPAVRELFVSDDLTVAELLKESQNLPTVELTKVDLQWLQVLAEGWATPLSGFMRERQYLQSMHFGQLLDLKHKVAFVGEKSDDKEDSWPMMDDINQSIPIVLPISDDVKKGLEGVTRIALKYNGQVYAILSDPEIFEHRKDERVCRQFGTNDPRHPAVAQVLESGNWLLGGDVAVVQKIQFNDGLDKYRKTPNELRAIFAEKNADAVFAFQLRNPIHNGHALLMRDTREKLLAEHKNPILLLHPLGGWTKDDDVPLDIRIKQHEAVIAERVLDPEWTVLSIFPSPMMYAGPTEVQWHARSRIAAGIQHYIVGRDPAGIQKPGSPDALYETTHGAKVLSMAPGLSALHILPFRVAAYDKTAKKMSFFDTSRKEDFENISGTKMRGLARNGDTPPEGFMAPTAWEVLAGYYKSLQNSN.

The disordered stretch occupies residues 1 to 26 (MLTPRDENNEGDAMPMLKKPRYSSLS). Residues 1–231 (MLTPRDENNE…VLDHLESKGL (231 aa)) are adenylyl-sulfate kinase. ATP is bound at residue 66–71 (GAGKTT). Residues 93 to 96 (DNIR), F105, 110 to 113 (RQEN), 136 to 137 (IS), K175, and 190 to 191 (GF) contribute to the adenosine 5'-phosphosulfate site. ATP is bound by residues C218, 449–452 (QLRN), 550–554 (GRDPA), and A592. A sulfate adenylyltransferase region spans residues 242–653 (VRELFVSDDL…AGYYKSLQNS (412 aa)).

In the N-terminal section; belongs to the APS kinase family. This sequence in the C-terminal section; belongs to the sulfate adenylyltransferase family.

Its subcellular location is the nucleus. The enzyme catalyses sulfate + ATP + H(+) = adenosine 5'-phosphosulfate + diphosphate. The catalysed reaction is adenosine 5'-phosphosulfate + ATP = 3'-phosphoadenylyl sulfate + ADP + H(+). Its pathway is sulfur metabolism; sulfate assimilation. Bifunctional enzyme with both ATP sulfurylase and APS kinase activity, which mediates two steps in the sulfate activation pathway. The first step is the transfer of a sulfate group to ATP to yield adenosine 5'-phosphosulfate (APS), and the second step is the transfer of a phosphate group from ATP to APS yielding 3'-phosphoadenylylsulfate (PAPS: activated sulfate donor used by sulfotransferase). Required for normal growth and development. Involved in several aspects of both embryonic and postembryonic development, including molting, changes in cell shape, and patterning of epithelial and muscle cells. The polypeptide is Bifunctional 3'-phosphoadenosine 5'-phosphosulfate synthase pps-1 (Caenorhabditis elegans).